The following is a 302-amino-acid chain: Ribostamycin:4-(gamma-L-glutamylamino)-(S)-2-hydroxybutanoyl-[BtrI acyl-carrier protein] 4-(gamma-L-glutamylamino)-(S)-2-hydroxybutanoate transferase (302 aa).

It carries out the reaction 4-(gamma-L-glutamylamino)-(2S)-2-hydroxybutanoyl-[BtrI ACP] + ribostamycin = gamma-L-glutamyl-butirosin B + holo-[BtrI ACP] + H(+). It functions in the pathway antibiotic biosynthesis; butirosin biosynthesis. Aminoglycoside acyltransferase that attaches the (S)-4-amino-2-hydroxybutyrate (AHBA) side chain from the acyl carrier protein BtrI to the aminoglycoside ribostamycin in the biosynthetic pathway of butirosin. The AHBA side chain protects the antibiotic from several common resistance mechanisms. The sequence is that of Ribostamycin:4-(gamma-L-glutamylamino)-(S)-2-hydroxybutanoyl-[BtrI acyl-carrier protein] 4-(gamma-L-glutamylamino)-(S)-2-hydroxybutanoate transferase (btrH) from Niallia circulans (Bacillus circulans).